A 492-amino-acid polypeptide reads, in one-letter code: Catalase isozyme 2 (492 aa).

Catalysis depends on residues histidine 65 and asparagine 138. Tyrosine 348 lines the heme pocket.

This sequence belongs to the catalase family. Homotetramer. It depends on heme as a cofactor.

The protein resides in the peroxisome. It carries out the reaction 2 H2O2 = O2 + 2 H2O. Occurs in almost all aerobically respiring organisms and serves to protect cells from the toxic effects of hydrogen peroxide. This is Catalase isozyme 2 (CAT2) from Nicotiana plumbaginifolia (Leadwort-leaved tobacco).